The primary structure comprises 100 residues: Putative membrane protein insertion efficiency factor (100 aa).

This sequence belongs to the UPF0161 family.

It is found in the cell membrane. Functionally, could be involved in insertion of integral membrane proteins into the membrane. The sequence is that of Putative membrane protein insertion efficiency factor from Enterococcus faecalis (strain ATCC 700802 / V583).